The primary structure comprises 316 residues: MGQDYYSVLGITRNSEDAQIKQAYRRLALKHHPLKSNEPSSAEIFRQIAEAYDVLSDPMKRGIYDKFGEEGLKGGIPLEFGSQTPWTTGYVFHGKPEKVFHEFFGGNNPFSEFFDAEGSEVDLNFGGLQGRGVKKQDPQVERDLYLSLEDLFFGCTKKIKISRRVLNEDGYSSTIKDKILTIDVKPGWRQGTRITFEKEGDQGPNIIPADIIFIVKEKLHPRFRRENDNLFFVNPIPLGKALTCCTVEVRTLDDRLLNIPINDIIHPKYFKKVPGEGMPLPEDPTKKGDLFIFFDIQFPTRLTPQKKQMLRQALLT.

The 65-residue stretch at 4-68 (DYYSVLGITR…MKRGIYDKFG (65 aa)) folds into the J domain.

In terms of assembly, homodimer. Component of the axonemal radial spoke complex 1 (RS1), at least composed of spoke head proteins RSPH1, RSPH3, RSPH9 and the cilia-specific component RSPH4A or sperm-specific component RSPH6A, spoke stalk proteins RSPH14, DNAJB13, DYDC1, ROPN1L and NME5, and the anchor protein IQUB. Interacts with SUN5. Interacts with IQUB. Specifically expressed in testis and trachea.

It localises to the cell projection. It is found in the cilium. The protein localises to the flagellum. Functionally, functions as part of axonemal radial spoke complexes that play an important part in the motility of sperm and cilia. The protein is DnaJ homolog subfamily B member 13 (DNAJB13) of Homo sapiens (Human).